The following is a 224-amino-acid chain: MKPQDLKLPYFWEERSPQIANHVFYVPNYYSRYEEFVMPTWQELFANNGPICCELCSGNGDWVVEQALKDASVNWIAVEKRFDRVRKIWSKMGNYRVNNLLIVCGEAQTFFSHYVSDASFQKIVVNFPDPWPKFRHRKHRLFQDLFVQDMMRTLVVGGQLTLATDDYNYLVNAITVMLKYLSPGLKSPHYINVKDNYGGSWFENLWRSKGQEIFCTEFIKRVGI.

Glu-54, Glu-79, Glu-106, and Asp-129 together coordinate S-adenosyl-L-methionine. Residue Asp-129 is part of the active site. Residues Lys-133 and Asp-165 each contribute to the substrate site.

The protein belongs to the class I-like SAM-binding methyltransferase superfamily. TrmB family.

It carries out the reaction guanosine(46) in tRNA + S-adenosyl-L-methionine = N(7)-methylguanosine(46) in tRNA + S-adenosyl-L-homocysteine. The protein operates within tRNA modification; N(7)-methylguanine-tRNA biosynthesis. Its function is as follows. Catalyzes the formation of N(7)-methylguanine at position 46 (m7G46) in tRNA. In Chlamydia trachomatis serovar D (strain ATCC VR-885 / DSM 19411 / UW-3/Cx), this protein is tRNA (guanine-N(7)-)-methyltransferase.